The primary structure comprises 483 residues: Aspartyl/glutamyl-tRNA(Asn/Gln) amidotransferase subunit B (483 aa).

Belongs to the GatB/GatE family. GatB subfamily. Heterotrimer of A, B and C subunits.

It carries out the reaction L-glutamyl-tRNA(Gln) + L-glutamine + ATP + H2O = L-glutaminyl-tRNA(Gln) + L-glutamate + ADP + phosphate + H(+). The catalysed reaction is L-aspartyl-tRNA(Asn) + L-glutamine + ATP + H2O = L-asparaginyl-tRNA(Asn) + L-glutamate + ADP + phosphate + 2 H(+). Its function is as follows. Allows the formation of correctly charged Asn-tRNA(Asn) or Gln-tRNA(Gln) through the transamidation of misacylated Asp-tRNA(Asn) or Glu-tRNA(Gln) in organisms which lack either or both of asparaginyl-tRNA or glutaminyl-tRNA synthetases. The reaction takes place in the presence of glutamine and ATP through an activated phospho-Asp-tRNA(Asn) or phospho-Glu-tRNA(Gln). This is Aspartyl/glutamyl-tRNA(Asn/Gln) amidotransferase subunit B from Rickettsia canadensis (strain McKiel).